A 1106-amino-acid polypeptide reads, in one-letter code: Exportin-T (1106 aa).

The interval Thr336–Asp357 is disordered. Over residues Arg343 to Asp357 the composition is skewed to polar residues.

Belongs to the exportin family.

The protein localises to the nucleus. It localises to the cytoplasm. Functionally, tRNA nucleus export receptor which facilitates tRNA translocation across the nuclear pore complex. Involved in pre-tRNA splicing, probably by affecting the interaction of pre-tRNA with splicing endonuclease. This Mycosarcoma maydis (Corn smut fungus) protein is Exportin-T (LOS1).